The sequence spans 460 residues: Cytochrome P450 CYP71D312 (460 aa).

Residue Cys-398 coordinates heme.

The protein belongs to the cytochrome P450 family. The cofactor is heme.

Its function is as follows. Probable heme-thiolate monooxygenase. The sequence is that of Cytochrome P450 CYP71D312 from Panax ginseng (Korean ginseng).